We begin with the raw amino-acid sequence, 1453 residues long: Collagen alpha-1(I) chain (1453 aa).

Residues 1–22 (MFSFVDLRLLLLLGATALLTHG) form the signal peptide. The propeptide at 23-151 (QEDIPEVSCI…PPGLGGNFAS (129 aa)) is N-terminal propeptide. The region spanning 29-87 (VSCIHNGLRVPNGETWKPEVCLICICHNGTAVCDDVQCNEELDCPNPQRREGECCAFCP) is the VWFC domain. An N-linked (GlcNAc...) asparagine glycan is attached at Asn-56. Positions 94-1210 (NSEDVGVEGP…GGRYYRADDA (1117 aa)) are disordered. 2 stretches are compositionally biased toward pro residues: residues 109-118 (PQGPRGPVGP) and 128-143 (PGLPGPPGPPGPPGPP). Residues 152–167 (QMSYGYDEKSAGVSVP) are nonhelical region (N-terminal). Lys-160 bears the Allysine mark. Ser-161 carries the post-translational modification Phosphoserine. The segment at 168–1181 (GPMGPSGPRG…PGPPGPPGPP (1014 aa)) is triple-helical region. 4-hydroxyproline is present on residues Pro-179, Pro-182, Pro-185, Pro-194, Pro-197, Pro-200, Pro-215, Pro-230, Pro-236, Pro-245, and Pro-251. Residues 198 to 207 (GEPGGSGPMG) are compositionally biased toward gly residues. The segment covering 218–232 (NGDDGEAGKPGRPGE) has biased composition (basic and acidic residues). Position 254 is a 5-hydroxylysine; alternate (Lys-254). The O-linked (Gal...) hydroxylysine; alternate glycan is linked to Lys-254. Position 260 is a phosphoserine (Ser-260). Low complexity predominate over residues 268 to 284 (DAGPAGPKGEPGSPGEN). 4-hydroxyproline occurs at positions 278, 281, 287, 296, and 302. The span at 307-320 (TAGARGNDGAVGAA) shows a compositional bias: low complexity. The segment covering 322-334 (PPGPTGPTGPPGF) has biased composition (pro residues). 4-hydroxyproline is present on residues Pro-323, Pro-332, Pro-335, Pro-362, Pro-365, Pro-377, Pro-383, Pro-392, Pro-398, Pro-401, and Pro-416. Over residues 368 to 407 (AGAAGPAGNPGADGQPGAKGANGAPGIAGAPGFPGARGPS) the composition is skewed to low complexity. Lys-419 is modified (5-hydroxylysine). A 4-hydroxyproline mark is found at Pro-425, Pro-428, Pro-440, Pro-449, Pro-464, Pro-470, Pro-479, and Pro-485. The span at 474–483 (GERGGPGSRG) shows a compositional bias: gly residues. Lys-494 carries the 5-hydroxylysine modification. A compositionally biased stretch (low complexity) spans 499-515 (ERGAPGPAGPKGSPGEA). Pro-503, Pro-512, Pro-518, Pro-524, Pro-533, Pro-536, Pro-545, Pro-554, Pro-560, Pro-572, Pro-581, Pro-590, Pro-593, Pro-611, Pro-629, Pro-635, Pro-641, Pro-647, Pro-653, Pro-659, Pro-671, Pro-680, Pro-692, Pro-704, Pro-707, Pro-713, Pro-719, and Pro-728 each carry 4-hydroxyproline. Over residues 527 to 566 (KGLTGSPGSPGPDGKTGPPGPAGQDGRPGPAGPPGARGQA) the composition is skewed to low complexity. Low complexity predominate over residues 623 to 650 (QGPAGSPGFQGLPGPAGPPGEAGKPGEQ). Low complexity-rich tracts occupy residues 685-695 (PRGNNGAPGND) and 703-716 (APGAPGSQGAPGLQ). Residues 734-736 (RGD) carry the Cell attachment site motif. At Lys-740 the chain carries 5-hydroxylysine. Residues Pro-746, Pro-761, and Pro-767 each carry the 4-hydroxyproline modification. Ser-776 is subject to Phosphoserine. 7 positions are modified to 4-hydroxyproline: Pro-788, Pro-797, Pro-806, Pro-812, Pro-830, Pro-839, and Pro-848. A compositionally biased stretch (low complexity) spans 800 to 815 (AGFAGPPGADGQPGAK). Residues 829 to 841 (PPGPAGPAGPPGP) are compositionally biased toward pro residues. The segment covering 842-872 (IGNVGAPGPKGPRGAAGPPGATGFPGAAGRV) has biased composition (low complexity). Position 851 is a 5-hydroxylysine (Lys-851). 4-hydroxyproline occurs at positions 860 and 866. Pro-874 carries the post-translational modification 3-hydroxyproline. Residues Pro-875, Pro-884, Pro-887, Pro-908, Pro-917, Pro-926, Pro-935, Pro-953, Pro-962, Pro-965, Pro-971, Pro-986, Pro-992, Pro-998, Pro-1007, and Pro-1013 each carry the 4-hydroxyproline modification. Residues 901–910 (ETGPAGRPGE) show a composition bias toward low complexity. Residues 920-935 (AGEKGSPGADGPAGSP) are compositionally biased toward low complexity. The segment covering 985-995 (PPGPMGPPGLA) has biased composition (pro residues). A compositionally biased stretch (low complexity) spans 997–1012 (PPGESGREGSPGAEGS). A 5-hydroxylysine modification is found at Lys-1022. Residues 1031-1046 (AGPPGAPGAPGAPGPV) show a composition bias toward pro residues. Residues Pro-1034, Pro-1037, and Pro-1040 each carry the 4-hydroxyproline modification. A compositionally biased stretch (low complexity) spans 1067–1081 (IGPAGARGPAGPQGP). Residues 1082-1084 (RGD) carry the Cell attachment site motif. The span at 1082–1096 (RGDKGETGEQGDRGI) shows a compositional bias: basic and acidic residues. Lys-1085 carries the 5-hydroxylysine modification. At Lys-1097 the chain carries 5-hydroxylysine; alternate. Lys-1097 carries O-linked (Gal...) hydroxylysine; alternate glycosylation. Residues 1102–1148 (FSGLQGPPGSPGSPGEQGPSGASGPAGPRGPPGSAGSPGKDGLNGLP) are compositionally biased toward low complexity. 4-hydroxyproline occurs at positions 1109, 1112, 1115, 1133, and 1148. 3-hydroxyproline is present on Pro-1153. Pro-1154 carries the 4-hydroxyproline modification. Residues 1166–1181 (AGPPGPPGPPGPPGPP) show a composition bias toward pro residues. Pro-1168 bears the 3-hydroxyproline mark. Pro-1169 is modified (4-hydroxyproline). A 3-hydroxyproline modification is found at Pro-1171. Pro-1172 is subject to 4-hydroxyproline. The residue at position 1174 (Pro-1174) is a 3-hydroxyproline. A 4-hydroxyproline mark is found at Pro-1175, Pro-1178, and Pro-1181. The interval 1182-1207 (SGGYDFSFLPQPPQEKSQDGGRYYRA) is nonhelical region (C-terminal). Residue Lys-1197 is modified to Allysine. The segment covering 1197-1210 (KSQDGGRYYRADDA) has biased composition (basic and acidic residues). A propeptide spans 1208–1453 (DDANVVRDRD…GLDIGPACFV (246 aa)) (C-terminal propeptide). The Fibrillar collagen NC1 domain occupies 1218 to 1453 (LEVDTTLKSL…GLDIGPACFV (236 aa)). 3 disulfide bridges follow: Cys-1248-Cys-1280, Cys-1288-Cys-1451, and Cys-1359-Cys-1404. Ca(2+)-binding residues include Asp-1266, Asn-1268, Gln-1269, Cys-1271, and Asp-1274. An N-linked (GlcNAc...) asparagine glycan is attached at Asn-1354.

The protein belongs to the fibrillar collagen family. As to quaternary structure, trimers of one alpha 2(I) and two alpha 1(I) chains. Interacts with MRC2. Interacts with TRAM2. Interacts with MFAP4 in a Ca (2+)-dependent manner. Post-translationally, contains mostly 4-hydroxyproline. Proline residues at the third position of the tripeptide repeating unit (G-X-Y) are hydroxylated in some or all of the chains. In terms of processing, contains 3-hydroxyproline at a few sites. This modification occurs on the first proline residue in the sequence motif Gly-Pro-Hyp, where Hyp is 4-hydroxyproline. Lysine residues at the third position of the tripeptide repeating unit (G-X-Y) are 5-hydroxylated in some or all of the chains. Post-translationally, O-glycosylated on hydroxylated lysine residues. The O-linked glycan consists of a Glc-Gal disaccharide. In terms of tissue distribution, forms the fibrils of tendon, ligaments and bones. In bones the fibrils are mineralized with calcium hydroxyapatite.

Its subcellular location is the secreted. It localises to the extracellular space. The protein localises to the extracellular matrix. Functionally, type I collagen is a member of group I collagen (fibrillar forming collagen). In Mus musculus (Mouse), this protein is Collagen alpha-1(I) chain.